The sequence spans 648 residues: 1-deoxy-D-xylulose-5-phosphate synthase 1 (648 aa).

Thiamine diphosphate-binding positions include His82 and 123–125 (AHS). Mg(2+) is bound at residue Asp154. Residues 155 to 156 (GS), Asn183, Tyr292, and Glu374 each bind thiamine diphosphate. A Mg(2+)-binding site is contributed by Asn183.

The protein belongs to the transketolase family. DXPS subfamily. Homodimer. Mg(2+) is required as a cofactor. The cofactor is thiamine diphosphate.

The catalysed reaction is D-glyceraldehyde 3-phosphate + pyruvate + H(+) = 1-deoxy-D-xylulose 5-phosphate + CO2. The protein operates within metabolic intermediate biosynthesis; 1-deoxy-D-xylulose 5-phosphate biosynthesis; 1-deoxy-D-xylulose 5-phosphate from D-glyceraldehyde 3-phosphate and pyruvate: step 1/1. Catalyzes the acyloin condensation reaction between C atoms 2 and 3 of pyruvate and glyceraldehyde 3-phosphate to yield 1-deoxy-D-xylulose-5-phosphate (DXP). The sequence is that of 1-deoxy-D-xylulose-5-phosphate synthase 1 from Cereibacter sphaeroides (strain ATCC 17023 / DSM 158 / JCM 6121 / CCUG 31486 / LMG 2827 / NBRC 12203 / NCIMB 8253 / ATH 2.4.1.) (Rhodobacter sphaeroides).